The following is a 157-amino-acid chain: SsrA-binding protein (157 aa).

A disordered region spans residues 133 to 157 (LHDKRETEKKRDWSREKSRLLRARG). The span at 135–151 (DKRETEKKRDWSREKSR) shows a compositional bias: basic and acidic residues.

The protein belongs to the SmpB family.

The protein localises to the cytoplasm. In terms of biological role, required for rescue of stalled ribosomes mediated by trans-translation. Binds to transfer-messenger RNA (tmRNA), required for stable association of tmRNA with ribosomes. tmRNA and SmpB together mimic tRNA shape, replacing the anticodon stem-loop with SmpB. tmRNA is encoded by the ssrA gene; the 2 termini fold to resemble tRNA(Ala) and it encodes a 'tag peptide', a short internal open reading frame. During trans-translation Ala-aminoacylated tmRNA acts like a tRNA, entering the A-site of stalled ribosomes, displacing the stalled mRNA. The ribosome then switches to translate the ORF on the tmRNA; the nascent peptide is terminated with the 'tag peptide' encoded by the tmRNA and targeted for degradation. The ribosome is freed to recommence translation, which seems to be the essential function of trans-translation. The chain is SsrA-binding protein from Afipia carboxidovorans (strain ATCC 49405 / DSM 1227 / KCTC 32145 / OM5) (Oligotropha carboxidovorans).